Reading from the N-terminus, the 225-residue chain is Uracil-DNA glycosylase (225 aa).

Asp-65 functions as the Proton acceptor in the catalytic mechanism.

Belongs to the uracil-DNA glycosylase (UDG) superfamily. UNG family.

Its subcellular location is the cytoplasm. The catalysed reaction is Hydrolyzes single-stranded DNA or mismatched double-stranded DNA and polynucleotides, releasing free uracil.. Excises uracil residues from the DNA which can arise as a result of misincorporation of dUMP residues by DNA polymerase or due to deamination of cytosine. The polypeptide is Uracil-DNA glycosylase (Bacillus cereus (strain AH820)).